The following is a 170-amino-acid chain: Adenine phosphoribosyltransferase (170 aa).

Belongs to the purine/pyrimidine phosphoribosyltransferase family. Homodimer.

It localises to the cytoplasm. It carries out the reaction AMP + diphosphate = 5-phospho-alpha-D-ribose 1-diphosphate + adenine. The protein operates within purine metabolism; AMP biosynthesis via salvage pathway; AMP from adenine: step 1/1. Functionally, catalyzes a salvage reaction resulting in the formation of AMP, that is energically less costly than de novo synthesis. The polypeptide is Adenine phosphoribosyltransferase (Bacillus licheniformis (strain ATCC 14580 / DSM 13 / JCM 2505 / CCUG 7422 / NBRC 12200 / NCIMB 9375 / NCTC 10341 / NRRL NRS-1264 / Gibson 46)).